We begin with the raw amino-acid sequence, 317 residues long: Putative 2-hydroxyacid dehydrogenase SAOUHSC_02577 (317 aa).

Residues 155–156, 234–236, and aspartate 260 each bind NAD(+); these read EI and ASR. Arginine 236 is a catalytic residue. Residue glutamate 265 is part of the active site. Catalysis depends on histidine 283, which acts as the Proton donor. Position 283 to 286 (283 to 286) interacts with NAD(+); sequence HIGN.

It belongs to the D-isomer specific 2-hydroxyacid dehydrogenase family.

This is Putative 2-hydroxyacid dehydrogenase SAOUHSC_02577 from Staphylococcus aureus (strain NCTC 8325 / PS 47).